The chain runs to 169 residues: Large ribosomal subunit protein uL5 (169 aa).

This sequence belongs to the universal ribosomal protein uL5 family. As to quaternary structure, part of the 50S ribosomal subunit; contacts the 5S rRNA and probably tRNA. Forms a bridge to the 30S subunit in the 70S ribosome.

Functionally, this is one of the proteins that bind and probably mediate the attachment of the 5S RNA into the large ribosomal subunit, where it forms part of the central protuberance. In the 70S ribosome it contacts protein S13 of the 30S subunit (bridge B1b), connecting the 2 subunits; this bridge is implicated in subunit movement. May contact the P site tRNA; the 5S rRNA and some of its associated proteins might help stabilize positioning of ribosome-bound tRNAs. In Cenarchaeum symbiosum (strain A), this protein is Large ribosomal subunit protein uL5.